Here is a 118-residue protein sequence, read N- to C-terminus: uncharacterized protein (118 aa).

This is an uncharacterized protein from Escherichia coli (strain K12).